Here is a 492-residue protein sequence, read N- to C-terminus: 3-octaprenyl-4-hydroxybenzoate carboxy-lyase (492 aa).

N175 is a binding site for Mn(2+). Residues 178–180 (IYR), 192–194 (RWL), and 197–198 (RG) each bind prenylated FMN. E241 serves as a coordination point for Mn(2+). D290 acts as the Proton donor in catalysis.

It belongs to the UbiD family. As to quaternary structure, homohexamer. Requires prenylated FMN as cofactor. It depends on Mn(2+) as a cofactor.

The protein resides in the cell membrane. The enzyme catalyses a 4-hydroxy-3-(all-trans-polyprenyl)benzoate + H(+) = a 2-(all-trans-polyprenyl)phenol + CO2. It participates in cofactor biosynthesis; ubiquinone biosynthesis. Its function is as follows. Catalyzes the decarboxylation of 3-octaprenyl-4-hydroxy benzoate to 2-octaprenylphenol, an intermediate step in ubiquinone biosynthesis. This is 3-octaprenyl-4-hydroxybenzoate carboxy-lyase from Salmonella typhi.